Consider the following 472-residue polypeptide: Methylenetetrahydrofolate--tRNA-(uracil-5-)-methyltransferase TrmFO (472 aa).

Position 15–20 (15–20 (GGGLAG)) interacts with FAD.

It belongs to the MnmG family. TrmFO subfamily. FAD serves as cofactor.

It localises to the cytoplasm. It catalyses the reaction uridine(54) in tRNA + (6R)-5,10-methylene-5,6,7,8-tetrahydrofolate + NADH + H(+) = 5-methyluridine(54) in tRNA + (6S)-5,6,7,8-tetrahydrofolate + NAD(+). It carries out the reaction uridine(54) in tRNA + (6R)-5,10-methylene-5,6,7,8-tetrahydrofolate + NADPH + H(+) = 5-methyluridine(54) in tRNA + (6S)-5,6,7,8-tetrahydrofolate + NADP(+). Its function is as follows. Catalyzes the folate-dependent formation of 5-methyl-uridine at position 54 (M-5-U54) in all tRNAs. The chain is Methylenetetrahydrofolate--tRNA-(uracil-5-)-methyltransferase TrmFO from Rhizobium meliloti (strain 1021) (Ensifer meliloti).